The sequence spans 393 residues: tRNA(Met) cytidine acetate ligase (393 aa).

ATP-binding residues include Gly81, Asn142, and Arg167.

Belongs to the TmcAL family.

The protein resides in the cytoplasm. The enzyme catalyses cytidine(34) in elongator tRNA(Met) + acetate + ATP = N(4)-acetylcytidine(34) in elongator tRNA(Met) + AMP + diphosphate. Catalyzes the formation of N(4)-acetylcytidine (ac(4)C) at the wobble position of elongator tRNA(Met), using acetate and ATP as substrates. First activates an acetate ion to form acetyladenylate (Ac-AMP) and then transfers the acetyl group to tRNA to form ac(4)C34. The protein is tRNA(Met) cytidine acetate ligase of Bacillus cereus (strain AH187).